Here is a 377-residue protein sequence, read N- to C-terminus: Probable glucokinase 2 (377 aa).

Position 27–32 (27–32 (CDVGGS)) interacts with ATP.

Belongs to the bacterial glucokinase family.

The enzyme catalyses D-glucose + ATP = D-glucose 6-phosphate + ADP + H(+). This is Probable glucokinase 2 (GK2) from Trichomonas vaginalis.